The following is a 519-amino-acid chain: uncharacterized protein (519 aa).

Helical transmembrane passes span 37 to 57 (ISMS…AQLM), 82 to 102 (GQLS…ILIA), 114 to 134 (MFVL…FSYY), 146 to 166 (ALTG…LGRV), 175 to 195 (LIFA…SVFS), 209 to 229 (WTTA…IPHI), 240 to 260 (FDYL…FSWN), 269 to 289 (VPYV…FVLV), 309 to 329 (CVLI…YYLW), 337 to 357 (FATP…GCAA), 373 to 393 (IMVV…TAPI), 402 to 422 (FVSI…ATLM), 434 to 454 (IAAS…LGIA), and 475 to 495 (AWYM…LTVF).

Belongs to the major facilitator superfamily.

Its subcellular location is the endoplasmic reticulum. The protein localises to the membrane. This is an uncharacterized protein from Schizosaccharomyces pombe (strain 972 / ATCC 24843) (Fission yeast).